Here is a 237-residue protein sequence, read N- to C-terminus: UPF0280 protein Mthe_1297 (237 aa).

It belongs to the UPF0280 family.

The polypeptide is UPF0280 protein Mthe_1297 (Methanothrix thermoacetophila (strain DSM 6194 / JCM 14653 / NBRC 101360 / PT) (Methanosaeta thermophila)).